Reading from the N-terminus, the 254-residue chain is Phosphoribosylaminoimidazole-succinocarboxamide synthase (254 aa).

It belongs to the SAICAR synthetase family.

It catalyses the reaction 5-amino-1-(5-phospho-D-ribosyl)imidazole-4-carboxylate + L-aspartate + ATP = (2S)-2-[5-amino-1-(5-phospho-beta-D-ribosyl)imidazole-4-carboxamido]succinate + ADP + phosphate + 2 H(+). Its pathway is purine metabolism; IMP biosynthesis via de novo pathway; 5-amino-1-(5-phospho-D-ribosyl)imidazole-4-carboxamide from 5-amino-1-(5-phospho-D-ribosyl)imidazole-4-carboxylate: step 1/2. The sequence is that of Phosphoribosylaminoimidazole-succinocarboxamide synthase from Brucella anthropi (strain ATCC 49188 / DSM 6882 / CCUG 24695 / JCM 21032 / LMG 3331 / NBRC 15819 / NCTC 12168 / Alc 37) (Ochrobactrum anthropi).